The following is a 534-amino-acid chain: Probable bifunctional tRNA threonylcarbamoyladenosine biosynthesis protein (534 aa).

The interval 1–324 (MICLGIEGTA…YRTDQVEVTW (324 aa)) is kae1. Positions 108, 112, and 129 each coordinate Fe cation. Residues 129 to 133 (YTSGG), D161, G174, E178, and N258 each bind L-threonylcarbamoyladenylate. D286 lines the Fe cation pocket. A Protein kinase domain is found at 335 to 534 (LPDNIKEKGA…DEIEKRGRYL (200 aa)). ATP-binding positions include 340 to 348 (KEKGAEADI) and K361. The active-site Proton acceptor; for kinase activity is D455.

This sequence in the N-terminal section; belongs to the KAE1 / TsaD family. The protein in the C-terminal section; belongs to the protein kinase superfamily. Tyr protein kinase family. BUD32 subfamily. In terms of assembly, component of the KEOPS complex that consists of Kae1, Bud32, Cgi121 and Pcc1; the whole complex dimerizes. Requires Fe(2+) as cofactor.

The protein resides in the cytoplasm. The catalysed reaction is L-seryl-[protein] + ATP = O-phospho-L-seryl-[protein] + ADP + H(+). The enzyme catalyses L-threonyl-[protein] + ATP = O-phospho-L-threonyl-[protein] + ADP + H(+). It carries out the reaction L-threonylcarbamoyladenylate + adenosine(37) in tRNA = N(6)-L-threonylcarbamoyladenosine(37) in tRNA + AMP + H(+). Required for the formation of a threonylcarbamoyl group on adenosine at position 37 (t(6)A37) in tRNAs that read codons beginning with adenine. Is a component of the KEOPS complex that is probably involved in the transfer of the threonylcarbamoyl moiety of threonylcarbamoyl-AMP (TC-AMP) to the N6 group of A37. The Kae1 domain likely plays a direct catalytic role in this reaction. The Bud32 domain probably displays kinase activity that regulates Kae1 function. In Methanosphaera stadtmanae (strain ATCC 43021 / DSM 3091 / JCM 11832 / MCB-3), this protein is Probable bifunctional tRNA threonylcarbamoyladenosine biosynthesis protein.